A 489-amino-acid polypeptide reads, in one-letter code: Protein DETOXIFICATION 26 (489 aa).

12 consecutive transmembrane segments (helical) span residues 42 to 62 (IWYI…ILII), 75 to 95 (LAAI…LLLG), 125 to 145 (IILF…TPIL), 157 to 177 (LTGT…FFFP), 190 to 210 (VIAI…WFFV), 217 to 237 (IIGT…ILFL), 271 to 291 (IMLC…GNLV), 300 to 320 (LSIC…FFAG), 342 to 362 (IVSI…IVIF), 385 to 405 (VLLA…GVAV), 416 to 436 (INLG…GWIF), and 442 to 462 (GIWA…LIII).

The protein belongs to the multi antimicrobial extrusion (MATE) (TC 2.A.66.1) family.

The protein resides in the membrane. This Arabidopsis thaliana (Mouse-ear cress) protein is Protein DETOXIFICATION 26.